A 116-amino-acid chain; its full sequence is Large ribosomal subunit protein bL17 (116 aa).

It belongs to the bacterial ribosomal protein bL17 family. As to quaternary structure, part of the 50S ribosomal subunit. Contacts protein L32.

In Synechococcus sp. (strain JA-2-3B'a(2-13)) (Cyanobacteria bacterium Yellowstone B-Prime), this protein is Large ribosomal subunit protein bL17.